Reading from the N-terminus, the 404-residue chain is Cysteine desulfurase IscS (404 aa).

Residues 75–76 (AT), Asn155, Gln183, and 203–205 (SAH) contribute to the pyridoxal 5'-phosphate site. The residue at position 206 (Lys206) is an N6-(pyridoxal phosphate)lysine. Thr243 provides a ligand contact to pyridoxal 5'-phosphate. Cys328 acts as the Cysteine persulfide intermediate in catalysis. Cys328 provides a ligand contact to [2Fe-2S] cluster.

It belongs to the class-V pyridoxal-phosphate-dependent aminotransferase family. NifS/IscS subfamily. In terms of assembly, homodimer. Forms a heterotetramer with IscU, interacts with other sulfur acceptors. Requires pyridoxal 5'-phosphate as cofactor.

The protein resides in the cytoplasm. The catalysed reaction is (sulfur carrier)-H + L-cysteine = (sulfur carrier)-SH + L-alanine. Its pathway is cofactor biosynthesis; iron-sulfur cluster biosynthesis. Functionally, master enzyme that delivers sulfur to a number of partners involved in Fe-S cluster assembly, tRNA modification or cofactor biosynthesis. Catalyzes the removal of elemental sulfur atoms from cysteine to produce alanine. Functions as a sulfur delivery protein for Fe-S cluster synthesis onto IscU, an Fe-S scaffold assembly protein, as well as other S acceptor proteins. The protein is Cysteine desulfurase IscS of Pseudomonas aeruginosa (strain LESB58).